Reading from the N-terminus, the 452-residue chain is Chaperone SurA (452 aa).

Residues 1–28 (MKKTLRFAAVVSSLAAASALLAAAPAAA) form the signal peptide. PpiC domains follow at residues 186–288 (QQDL…RLVD) and 302–400 (IVQT…QVLS).

Its subcellular location is the periplasm. The catalysed reaction is [protein]-peptidylproline (omega=180) = [protein]-peptidylproline (omega=0). Functionally, chaperone involved in the correct folding and assembly of outer membrane proteins. Recognizes specific patterns of aromatic residues and the orientation of their side chains, which are found more frequently in integral outer membrane proteins. May act in both early periplasmic and late outer membrane-associated steps of protein maturation. In Burkholderia lata (strain ATCC 17760 / DSM 23089 / LMG 22485 / NCIMB 9086 / R18194 / 383), this protein is Chaperone SurA.